Here is a 1005-residue protein sequence, read N- to C-terminus: Translocated actin-recruiting phosphoprotein (1005 aa).

Residues 1–10 (MTNSISGDQP) are compositionally biased toward polar residues. Disordered regions lie at residues 1-36 (MTNS…SVST), 74-128 (PTVT…DYEP), 191-214 (SIDD…NSLR), 343-365 (SIDD…LNSL), 611-645 (WGTQ…TPSS), 661-748 (NIRD…DGPA), and 792-847 (TGTS…TSLM). Composition is skewed to low complexity over residues 11-36 (TVTT…SVST) and 74-121 (PTVT…SSDH). Polar residues-rich tracts occupy residues 191–205 (SIDD…NTSG) and 343–357 (SIDD…NTSG). Composition is skewed to low complexity over residues 661 to 700 (NIRD…TDDI), 715 to 734 (GDIS…VSSS), and 831 to 846 (STTT…TTSL).

Belongs to the chlamydial CPn_0572/CT_456/TC_0741 family. Post-translationally, phosphorylated on a tyrosine on attachment to the host cell. Tyrosine phosphorylation is temporally and spatially associated with recruitment of actin to the site of chlamydial entry. Phosphorylated Tarp seems to remain cytoplasmically exposed on the inclusion membrane at one side of internalized elementary bodies for several hours after entry.

Its subcellular location is the secreted. Its function is as follows. Appears to initiate or participate in signaling events that regulate the actin recruitment, which ultimately leads to internalization. The polypeptide is Translocated actin-recruiting phosphoprotein (tarP) (Chlamydia trachomatis serovar L2 (strain ATCC VR-902B / DSM 19102 / 434/Bu)).